A 487-amino-acid chain; its full sequence is Cytochrome P450 720B2 (487 aa).

A helical transmembrane segment spans residues 14–34; the sequence is WLVGLLCLVLGFLLLQLYKLV. Heme is bound at residue C436.

This sequence belongs to the cytochrome P450 family. Heme is required as a cofactor.

It is found in the membrane. The protein is Cytochrome P450 720B2 (CYP720B2) of Pinus taeda (Loblolly pine).